Here is a 783-residue protein sequence, read N- to C-terminus: Outer membrane usher protein FanD (783 aa).

Residues 1 to 23 (MNRKKHQILKILLLCLISSKSSA) form the signal peptide. Cysteines 763 and 782 form a disulfide.

This sequence belongs to the fimbrial export usher family.

The protein localises to the cell outer membrane. Its function is as follows. Involved in the export and assembly of K99 fimbrial subunits across the outer membrane. The polypeptide is Outer membrane usher protein FanD (fanD) (Escherichia coli).